The chain runs to 247 residues: ATP synthase subunit a, chloroplastic (247 aa).

A run of 5 helical transmembrane segments spans residues Gln-38–Val-58, Val-95–Leu-115, Ile-134–Ser-154, Leu-199–Leu-219, and Gly-220–Gly-240.

It belongs to the ATPase A chain family. F-type ATPases have 2 components, CF(1) - the catalytic core - and CF(0) - the membrane proton channel. CF(1) has five subunits: alpha(3), beta(3), gamma(1), delta(1), epsilon(1). CF(0) has four main subunits: a, b, b' and c.

The protein resides in the plastid. The protein localises to the chloroplast thylakoid membrane. Key component of the proton channel; it plays a direct role in the translocation of protons across the membrane. The polypeptide is ATP synthase subunit a, chloroplastic (Zea mays (Maize)).